Here is a 61-residue protein sequence, read N- to C-terminus: Conotoxin Vn5.3 (61 aa).

Residues 1 to 19 (MHCLPVFVILLLLIASAPG) form the signal peptide. The propeptide occupies 20 to 50 (VDVQPKTKNFMTRASLRDFAKKTPKRLSKLR).

The protein belongs to the conotoxin T superfamily. Contains 2 disulfide bonds that can be either 'C1-C3, C2-C4' or 'C1-C4, C2-C3', since these disulfide connectivities have been observed for conotoxins with cysteine framework V (for examples, see AC P0DQQ7 and AC P81755). As to expression, expressed by the venom duct.

The protein resides in the secreted. In Conus ventricosus (Mediterranean cone), this protein is Conotoxin Vn5.3.